Here is a 567-residue protein sequence, read N- to C-terminus: PEX5-related protein (567 aa).

The disordered stretch occupies residues 56–105; sequence SEPVSQPQTKAKKSEPSSKSSSLKKKADGSDLISADAEQRAQALRGPETS. Position 146 is a phosphoserine (serine 146). The interval 150–169 is disordered; that stretch reads LWSAEHRSQPELSTGKSALN. A phosphoserine mark is found at serine 194, serine 198, and serine 202. 3 TPR repeats span residues 267 to 300, 301 to 334, and 336 to 368; these read WPGA…DPGD, AEAW…QPNN, and KALM…NPKY. Phosphoserine occurs at positions 386 and 388. TPR repeat units follow at residues 415 to 448, 450 to 482, and 484 to 516; these read PDLQ…RPED, SLWN…QPGF, and RSRY…QRKS.

Belongs to the peroxisomal targeting signal receptor family. Interacts with RAB8B. Forms an obligate 4:4 complex with HCN2. Interacts with HCN3. Interacts with HCN4 with a 4:4 HCN4:PEX5L stoichiometry; reduces the effects of cAMP on the voltage-dependence and rate of activation of HCN4.

It is found in the cytoplasm. Its subcellular location is the membrane. Its function is as follows. Accessory subunit of hyperpolarization-activated cyclic nucleotide-gated (HCN) channels, regulating their cell-surface expression and cyclic nucleotide dependence. This is PEX5-related protein (Pex5l) from Mus musculus (Mouse).